We begin with the raw amino-acid sequence, 359 residues long: 3-dehydroshikimate dehydratase (359 aa).

This sequence belongs to the bacterial two-domain DSD family. As to quaternary structure, monomer.

The enzyme catalyses 3-dehydroshikimate = 3,4-dihydroxybenzoate + H2O. It functions in the pathway aromatic compound metabolism; 3,4-dihydroxybenzoate biosynthesis; 3,4-dihydroxybenzoate from 3-dehydroquinate: step 2/2. Divalent cations such as Mg(2+), but also MO(2+), Mn(2+), Ba(2+), and Co(2+) activate the enzyme, whereas monovalent cations as K(+), Na(+), and NH4(+) decrease its activity slightly. 3-dehydroshikimate dehydratase; part of the qa gene cluster that mediates the catabolism of quinic acid (QA) and as such, allows the use of QA as a sole carbon source. Catalyzes the third reaction in the inducible quinic acid catabolic pathway by converting dehydroshikimate to protocatechuate. The qa cluster encodes 3 inducible enymes (qa-2, qa-3 and qa-4) catalyzing the first three reactions in the catabolism of quinic acid to protocatechuic acid (also known as 3,4-Dihydroxybenzoic acid). The polypeptide is 3-dehydroshikimate dehydratase (Neurospora crassa (strain ATCC 24698 / 74-OR23-1A / CBS 708.71 / DSM 1257 / FGSC 987)).